The sequence spans 132 residues: Large ribosomal subunit protein uL22 (132 aa).

The protein belongs to the universal ribosomal protein uL22 family. Part of the 50S ribosomal subunit.

In terms of biological role, this protein binds specifically to 23S rRNA; its binding is stimulated by other ribosomal proteins, e.g. L4, L17, and L20. It is important during the early stages of 50S assembly. It makes multiple contacts with different domains of the 23S rRNA in the assembled 50S subunit and ribosome. Its function is as follows. The globular domain of the protein is located near the polypeptide exit tunnel on the outside of the subunit, while an extended beta-hairpin is found that lines the wall of the exit tunnel in the center of the 70S ribosome. In Pelagibacter ubique (strain HTCC1062), this protein is Large ribosomal subunit protein uL22.